The primary structure comprises 242 residues: DNA repair protein RecO (242 aa).

The protein belongs to the RecO family. As to quaternary structure, monomer.

Its function is as follows. Involved in DNA repair and RecF pathway recombination. The chain is DNA repair protein RecO from Salmonella agona (strain SL483).